The following is a 451-amino-acid chain: Ribulose bisphosphate carboxylase large chain (451 aa).

Position 5 is an N6,N6,N6-trimethyllysine (lysine 5). The substrate site is built by asparagine 114 and threonine 164. Lysine 166 functions as the Proton acceptor in the catalytic mechanism. Lysine 168 contributes to the substrate binding site. Positions 192, 194, and 195 each coordinate Mg(2+). Lysine 192 carries the post-translational modification N6-carboxylysine. Histidine 285 acts as the Proton acceptor in catalysis. Substrate contacts are provided by arginine 286, histidine 318, and serine 370.

The protein belongs to the RuBisCO large chain family. Type I subfamily. In terms of assembly, heterohexadecamer of 8 large chains and 8 small chains; disulfide-linked. The disulfide link is formed within the large subunit homodimers. Mg(2+) serves as cofactor. In terms of processing, the disulfide bond which can form in the large chain dimeric partners within the hexadecamer appears to be associated with oxidative stress and protein turnover.

Its subcellular location is the plastid. The protein resides in the chloroplast. The enzyme catalyses 2 (2R)-3-phosphoglycerate + 2 H(+) = D-ribulose 1,5-bisphosphate + CO2 + H2O. It catalyses the reaction D-ribulose 1,5-bisphosphate + O2 = 2-phosphoglycolate + (2R)-3-phosphoglycerate + 2 H(+). In terms of biological role, ruBisCO catalyzes two reactions: the carboxylation of D-ribulose 1,5-bisphosphate, the primary event in carbon dioxide fixation, as well as the oxidative fragmentation of the pentose substrate in the photorespiration process. Both reactions occur simultaneously and in competition at the same active site. This Aristea glauca protein is Ribulose bisphosphate carboxylase large chain.